The primary structure comprises 375 residues: Succinyl-diaminopimelate desuccinylase (375 aa).

Histidine 66 contributes to the Zn(2+) binding site. The active site involves aspartate 68. Zn(2+) is bound at residue aspartate 99. The Proton acceptor role is filled by glutamate 133. 3 residues coordinate Zn(2+): glutamate 134, glutamate 162, and histidine 348.

The protein belongs to the peptidase M20A family. DapE subfamily. Homodimer. Zn(2+) serves as cofactor. Requires Co(2+) as cofactor.

It catalyses the reaction N-succinyl-(2S,6S)-2,6-diaminopimelate + H2O = (2S,6S)-2,6-diaminopimelate + succinate. The protein operates within amino-acid biosynthesis; L-lysine biosynthesis via DAP pathway; LL-2,6-diaminopimelate from (S)-tetrahydrodipicolinate (succinylase route): step 3/3. Functionally, catalyzes the hydrolysis of N-succinyl-L,L-diaminopimelic acid (SDAP), forming succinate and LL-2,6-diaminopimelate (DAP), an intermediate involved in the bacterial biosynthesis of lysine and meso-diaminopimelic acid, an essential component of bacterial cell walls. This Yersinia pestis bv. Antiqua (strain Antiqua) protein is Succinyl-diaminopimelate desuccinylase.